The following is a 1000-amino-acid chain: Putative methyl-accepting chemotaxis protein sll0041 (1000 aa).

The tract at residues 1–59 (MTQNPSSDRRPDTAQSVANGETLDGALFTGLTDTAAAQDESSETSASFATIDGEDKSEV) is disordered. GAF domains lie at 342–478 (EIQG…QTTL) and 509–650 (NSEQ…GLAL). The 52-residue stretch at 671 to 722 (EKMQKRALELLMEVDPVSRGDLTIRAHVTEDEIGTIADSYNATIESLRRIVT) folds into the HAMP domain. The Methyl-accepting transducer domain maps to 727–963 (AASQFTETTD…SVTQTMALVA (237 aa)).

It belongs to the methyl-accepting chemotaxis (MCP) protein family.

This Synechocystis sp. (strain ATCC 27184 / PCC 6803 / Kazusa) protein is Putative methyl-accepting chemotaxis protein sll0041.